A 154-amino-acid chain; its full sequence is uncharacterized protein (154 aa).

4 consecutive transmembrane segments (helical) span residues 39–61, 65–87, 94–113, and 128–150; these read LLIFGSIAIAYTVIYISGLFFAR, LPYIRKILEIGISVIFYFLVSLL, VESLLLLKTLFLVQTIRVFI, and LLINIFSILGGISFFIIKLSPFT.

It localises to the cell membrane. This is an uncharacterized protein from Aquifex aeolicus (strain VF5).